We begin with the raw amino-acid sequence, 271 residues long: Low choriolytic enzyme (271 aa).

An N-terminal signal peptide occupies residues 1–20 (MDLLAKASVLLLLLLSLSNA). The propeptide at 21-71 (QTDNMEEAENGSSKEEIDESELEDVSSIIFRMNNNSMEELLEGDLVLPKTR) is activation peptide. N-linked (GlcNAc...) asparagine glycans are attached at residues Asn30 and Asn54. A Peptidase M12A domain is found at 72–271 (NAMKCFGAPD…ILRVNKLYKC (200 aa)). Disulfide bonds link Cys76–Cys83, Cys123–Cys271, and Cys144–Cys164. Zn(2+) is bound at residue His172. Glu173 is an active-site residue. Zn(2+) contacts are provided by His176 and His182. An N-linked (GlcNAc...) asparagine glycan is attached at Asn211.

Zn(2+) serves as cofactor.

The protein localises to the zymogen granule. It catalyses the reaction Hydrolysis of the inner layer of fish egg envelope. Also hydrolysis of casein and small molecule substrates such as succinyl-Leu-Leu-Val-Tyr-|-7-(4-methyl)coumarylamide.. Its function is as follows. Participates in the breakdown of the egg envelope, which is derived from the egg extracellular matrix, at the time of hatching. Thus allowing the newly hatched fish to swim free. LCE solubilizes the egg envelope only after it has been swollen by the action of HCE. The chain is Low choriolytic enzyme (lce) from Oryzias latipes (Japanese rice fish).